The chain runs to 302 residues: 4-hydroxy-tetrahydrodipicolinate synthase (302 aa).

Threonine 57 provides a ligand contact to pyruvate. Tyrosine 145 (proton donor/acceptor) is an active-site residue. Catalysis depends on lysine 173, which acts as the Schiff-base intermediate with substrate. Isoleucine 213 is a pyruvate binding site.

The protein belongs to the DapA family. As to quaternary structure, homotetramer; dimer of dimers.

Its subcellular location is the cytoplasm. It catalyses the reaction L-aspartate 4-semialdehyde + pyruvate = (2S,4S)-4-hydroxy-2,3,4,5-tetrahydrodipicolinate + H2O + H(+). Its pathway is amino-acid biosynthesis; L-lysine biosynthesis via DAP pathway; (S)-tetrahydrodipicolinate from L-aspartate: step 3/4. Its function is as follows. Catalyzes the condensation of (S)-aspartate-beta-semialdehyde [(S)-ASA] and pyruvate to 4-hydroxy-tetrahydrodipicolinate (HTPA). The chain is 4-hydroxy-tetrahydrodipicolinate synthase from Mycolicibacterium gilvum (strain PYR-GCK) (Mycobacterium gilvum (strain PYR-GCK)).